The sequence spans 113 residues: U11-theraphotoxin-Hhn1r (113 aa).

A signal peptide spans M1–A21. Residues D22 to R74 constitute a propeptide that is removed on maturation. Residues E61–D83 form a disordered region. 3 disulfide bridges follow: C75/C90, C82/C95, and C89/C110.

This sequence belongs to the neurotoxin 14 (magi-1) family. 01 (HNTX-16) subfamily. As to expression, expressed by the venom gland.

It is found in the secreted. Functionally, probable ion channel inhibitor. The chain is U11-theraphotoxin-Hhn1r from Cyriopagopus hainanus (Chinese bird spider).